A 533-amino-acid chain; its full sequence is Probable lipid II flippase MurJ (533 aa).

The next 13 membrane-spanning stretches (helical) occupy residues 25-45 (ETLMAAALGTGPMADVFYAAF), 90-110 (VLFSVLLLITIVMELAMPLLV), 131-151 (LAAVMFPYLMSMSLTAMMSGM), 158-178 (FFAAAVAPIFLNLVMISALFY), 192-212 (YLSWSVLVAGVLQLAVVYIGV), 233-253 (LLLLAIPAAITGGVTQINLVI), 274-294 (IYQLPLGVVGVAVGIVLLPEL), 316-336 (FVLFLTLPAAVALWLLSDDII), 350-370 (TTLVGSILAIFGLGLPAFVLI), 389-409 (YTAIAVAVNSALSILLFPVLA), 412-432 (GIALAEAVAGWLNAVQLFVTL), 449-469 (AMLLVSSAVMGGVIVYLSHRW), and 484-504 (GVLGLLILIAMAVYFIVAFLI).

Belongs to the MurJ/MviN family.

The protein resides in the cell inner membrane. The protein operates within cell wall biogenesis; peptidoglycan biosynthesis. Functionally, involved in peptidoglycan biosynthesis. Transports lipid-linked peptidoglycan precursors from the inner to the outer leaflet of the cytoplasmic membrane. The chain is Probable lipid II flippase MurJ from Rhizobium tropici.